The following is a 98-amino-acid chain: Small ribosomal subunit protein bS18 (98 aa).

This sequence belongs to the bacterial ribosomal protein bS18 family. In terms of assembly, part of the 30S ribosomal subunit. Forms a tight heterodimer with protein bS6.

Functionally, binds as a heterodimer with protein bS6 to the central domain of the 16S rRNA, where it helps stabilize the platform of the 30S subunit. The protein is Small ribosomal subunit protein bS18 of Flavobacterium johnsoniae (strain ATCC 17061 / DSM 2064 / JCM 8514 / BCRC 14874 / CCUG 350202 / NBRC 14942 / NCIMB 11054 / UW101) (Cytophaga johnsonae).